The primary structure comprises 545 residues: Chaperonin GroEL 1 (545 aa).

ATP is bound by residues 30-33, Lys51, 87-91, Gly415, and Asp495; these read TLGP and DGTTT.

It belongs to the chaperonin (HSP60) family. As to quaternary structure, forms a cylinder of 14 subunits composed of two heptameric rings stacked back-to-back. Interacts with the co-chaperonin GroES.

Its subcellular location is the cytoplasm. The enzyme catalyses ATP + H2O + a folded polypeptide = ADP + phosphate + an unfolded polypeptide.. In terms of biological role, together with its co-chaperonin GroES, plays an essential role in assisting protein folding. The GroEL-GroES system forms a nano-cage that allows encapsulation of the non-native substrate proteins and provides a physical environment optimized to promote and accelerate protein folding. The sequence is that of Chaperonin GroEL 1 from Rhizobium etli (strain ATCC 51251 / DSM 11541 / JCM 21823 / NBRC 15573 / CFN 42).